Here is a 369-residue protein sequence, read N- to C-terminus: UPF0284 protein AM1_5137 (369 aa).

The protein belongs to the UPF0284 family.

This Acaryochloris marina (strain MBIC 11017) protein is UPF0284 protein AM1_5137.